The primary structure comprises 44 residues: PVSRQQCSQRIQGERFNQCRSQMQDGQLQSCCQELQNVEEQCQC.

2 cysteine pairs are disulfide-bonded: cysteine 7–cysteine 42 and cysteine 19–cysteine 31.

The protein belongs to the 2S seed storage albumins family. The mature protein consists of a small and a large chain linked by 2 disulfide bonds.

This is a 2S seed storage protein. Has antifungal activity. Inhibits spore germination in H.sativum (IC(50)=62.5 ug/ml) and P.betae (IC(50)=62.5 ug/ml). Inhibits growth of H.sativum, V.albo-atrum and P.infestans. The sequence is that of 2S seed storage albumin protein from Taraxacum officinale (Common dandelion).